The following is a 433-amino-acid chain: Energy-coupling factor transporter ATP-binding protein EcfA2 (433 aa).

The ABC transporter domain maps to 25–389; it reads VRVKNLYAVY…QHIINSTSIQ (365 aa). 62–69 serves as a coordination point for ATP; that stretch reads GNSGSGKS.

It belongs to the ABC transporter superfamily. Energy-coupling factor EcfA family. Forms a stable energy-coupling factor (ECF) transporter complex composed of 2 membrane-embedded substrate-binding proteins (S component), 2 ATP-binding proteins (A component) and 2 transmembrane proteins (T component).

Its subcellular location is the cell membrane. In terms of biological role, ATP-binding (A) component of a common energy-coupling factor (ECF) ABC-transporter complex. Unlike classic ABC transporters this ECF transporter provides the energy necessary to transport a number of different substrates. This chain is Energy-coupling factor transporter ATP-binding protein EcfA2, found in Ureaplasma parvum serovar 3 (strain ATCC 700970).